Here is a 463-residue protein sequence, read N- to C-terminus: 3-isopropylmalate dehydratase large subunit (463 aa).

[4Fe-4S] cluster contacts are provided by C347, C407, and C410.

It belongs to the aconitase/IPM isomerase family. LeuC type 1 subfamily. In terms of assembly, heterodimer of LeuC and LeuD. [4Fe-4S] cluster serves as cofactor.

The catalysed reaction is (2R,3S)-3-isopropylmalate = (2S)-2-isopropylmalate. Its pathway is amino-acid biosynthesis; L-leucine biosynthesis; L-leucine from 3-methyl-2-oxobutanoate: step 2/4. In terms of biological role, catalyzes the isomerization between 2-isopropylmalate and 3-isopropylmalate, via the formation of 2-isopropylmaleate. The sequence is that of 3-isopropylmalate dehydratase large subunit from Buchnera aphidicola subsp. Cinara cedri (strain Cc).